A 215-amino-acid chain; its full sequence is Probable nicotinate-nucleotide adenylyltransferase (215 aa).

It belongs to the NadD family.

The catalysed reaction is nicotinate beta-D-ribonucleotide + ATP + H(+) = deamido-NAD(+) + diphosphate. Its pathway is cofactor biosynthesis; NAD(+) biosynthesis; deamido-NAD(+) from nicotinate D-ribonucleotide: step 1/1. In terms of biological role, catalyzes the reversible adenylation of nicotinate mononucleotide (NaMN) to nicotinic acid adenine dinucleotide (NaAD). This Fervidobacterium nodosum (strain ATCC 35602 / DSM 5306 / Rt17-B1) protein is Probable nicotinate-nucleotide adenylyltransferase.